Reading from the N-terminus, the 167-residue chain is Plastocyanin major isoform, chloroplastic (167 aa).

Residues 1–52 (MASVTSATVAIPSFTGLKASTIKSSATVRIQTAAVASPKLTVKSSLKNFGVA) constitute a chloroplast transit peptide. Residues 53–68 (AVAAAASIALAGNAMA) constitute a thylakoid transit peptide. The region spanning 69–167 (IEVLLGGGDG…AGMVGKVTVN (99 aa)) is the Plastocyanin-like domain. Cu cation is bound by residues His-105, Cys-152, His-155, and Met-160.

This sequence belongs to the plastocyanin family. Requires Cu(2+) as cofactor.

Its subcellular location is the plastid. It localises to the chloroplast thylakoid membrane. In terms of biological role, participates in electron transfer between P700 and the cytochrome b6-f complex in photosystem I. Seems to be the major plastocyanin in Arabidopsis. The protein is Plastocyanin major isoform, chloroplastic (DRT112) of Arabidopsis thaliana (Mouse-ear cress).